The sequence spans 255 residues: Small ribosomal subunit protein uS2 (255 aa).

The disordered stretch occupies residues 226–255 (QGVSNEEVAAEQNIDLDEKEKSEETEATEE).

This sequence belongs to the universal ribosomal protein uS2 family.

In Staphylococcus aureus (strain JH1), this protein is Small ribosomal subunit protein uS2.